Here is a 206-residue protein sequence, read N- to C-terminus: Small ribosomal subunit protein uS4 (206 aa).

The 61-residue stretch at 96-156 (GRLDNVVYRM…EKSKKQARIK (61 aa)) folds into the S4 RNA-binding domain.

This sequence belongs to the universal ribosomal protein uS4 family. Part of the 30S ribosomal subunit. Contacts protein S5. The interaction surface between S4 and S5 is involved in control of translational fidelity.

In terms of biological role, one of the primary rRNA binding proteins, it binds directly to 16S rRNA where it nucleates assembly of the body of the 30S subunit. Its function is as follows. With S5 and S12 plays an important role in translational accuracy. The sequence is that of Small ribosomal subunit protein uS4 from Pasteurella multocida (strain Pm70).